The following is a 319-amino-acid chain: MNLMRTAMLLAFMTVLFMAVGYVIGGRGGMMIALVIAAGMNFFSYWNSDRMVLRMYRAQEVDERSAPEYYGIVRDLAKNAGLPMPRVYVIDSPQPNAFATGRNPENAAVAASTGLLHSLSYEEVAGVMAHELAHIQYRDTLTMTMTATLAGAISMLGNFAFFFGGNRENNNPLGFIGVLIAMIVAPLAAALVQMAISRTREYSADRRGAEICGNPLWLSSALRKIAGAAHVVHNPDAERNPATAHMFIINPLSGERMDNLFSTHPNTENRVVALERMAREMSTGSTAPVRPDNAVRKSRSVPRTGWGRGGSEPPKGPWS.

2 helical membrane passes run 6–26 (TAML…VIGG) and 28–48 (GGMM…YWNS). Histidine 130 provides a ligand contact to Zn(2+). The active site involves glutamate 131. Histidine 134 contacts Zn(2+). 2 helical membrane passes run 145–165 (MTAT…FFGG) and 172–192 (PLGF…AALV). Glutamate 201 provides a ligand contact to Zn(2+). The segment at 280–319 (EMSTGSTAPVRPDNAVRKSRSVPRTGWGRGGSEPPKGPWS) is disordered.

This sequence belongs to the peptidase M48B family. Zn(2+) serves as cofactor.

The protein localises to the cell inner membrane. This chain is Protease HtpX homolog, found in Sinorhizobium medicae (strain WSM419) (Ensifer medicae).